The primary structure comprises 626 residues: 5'-AMP-activated protein kinase catalytic subunit alpha-2 (626 aa).

Residues 1–24 are compositionally biased toward basic and acidic residues; that stretch reads MFSHQDRDRDRKEDGGGDGTEMKS. Positions 1–77 are disordered; that stretch reads MFSHQDRDRD…GETSTKQQQE (77 aa). Basic residues predominate over residues 38–49; it reads NLSRKLSAKSRK. Residues 58 to 77 show a composition bias toward polar residues; that stretch reads DNSSKMSSPGGETSTKQQQE. Residues 87 to 339 form the Protein kinase domain; sequence YILKETLGVG…IKDVIAHEWF (253 aa). Residues 93–101 and K116 each bind ATP; that span reads LGVGTFGKV. D210 functions as the Proton acceptor in the catalytic mechanism. T243 bears the Phosphothreonine; by par-4 mark. Residues 541–568 form a disordered region; the sequence is SGSASASSSRHASMSMPQKPAGIRGTRT. Residues 542 to 555 are compositionally biased toward low complexity; it reads GSASASSSRHASMS.

This sequence belongs to the protein kinase superfamily. CAMK Ser/Thr protein kinase family. SNF1 subfamily. As to quaternary structure, tetramer, composed of 2 regulatory (R) and 2 catalytic (C) subunits. In the presence of cAMP it dissociates into 2 active monomeric C subunits and an R dimer that binds four cAMP molecules. In terms of processing, phosphorylated on Thr-243 in response to oxidative stress and during dauer development. Phosphorylation at Thr-243 is increased in response to sodium azide or the AMP analog AICAR (5-amino-1-(5-phospho-beta-D-ribosyl)imidazole-4-carboxamide). Expressed in the pharynx, the ventral cord, neurons including the hermaphrodite-specific neuron, body wall muscles, the vulva, the excretory canal, and weakly in the intestine.

It carries out the reaction L-seryl-[protein] + ATP = O-phospho-L-seryl-[protein] + ADP + H(+). The enzyme catalyses L-threonyl-[protein] + ATP = O-phospho-L-threonyl-[protein] + ADP + H(+). With respect to regulation, activated by phosphorylation. In terms of biological role, acts as a sensor that couples lifespan to information about energy levels and insulin-like signals. Role in motility and response to oxidative stress. Involved in the establishment of germline stem cell (GSC) quiescence during dauer development. Plays a role in axon regrowth after axotomy in PLM neurons. Plays a role in the maintenance of glycogen stores which are necessary for resistance to hyperosmotic stress. Plays a role in the regulation of flp-7 secretion from ASI neurons. Keeps the CREB-regulated transcription coactivator 1 homolog crtc-1 inactive which in turn inhibits flp-7 secretion. Following serotonin signaling, derepresses crtc-1 which stimulates flp-7 secretion and subsequent body fat loss. The polypeptide is 5'-AMP-activated protein kinase catalytic subunit alpha-2 (Caenorhabditis elegans).